The chain runs to 875 residues: Valine--tRNA ligase (875 aa).

The 'HIGH' region signature appears at 41 to 51 (PNVTGSLHMGH). A 'KMSKS' region motif is present at residues 525–529 (KMSKS). K528 provides a ligand contact to ATP. Residues 810 to 875 (VDLELIKKNL…ERISITIKGL (66 aa)) are a coiled coil.

Belongs to the class-I aminoacyl-tRNA synthetase family. ValS type 1 subfamily. In terms of assembly, monomer.

Its subcellular location is the cytoplasm. The enzyme catalyses tRNA(Val) + L-valine + ATP = L-valyl-tRNA(Val) + AMP + diphosphate. Catalyzes the attachment of valine to tRNA(Val). As ValRS can inadvertently accommodate and process structurally similar amino acids such as threonine, to avoid such errors, it has a 'posttransfer' editing activity that hydrolyzes mischarged Thr-tRNA(Val) in a tRNA-dependent manner. This chain is Valine--tRNA ligase, found in Pelagibacter ubique (strain HTCC1062).